Reading from the N-terminus, the 116-residue chain is uncharacterized protein (116 aa).

The disordered stretch occupies residues 97-116; that stretch reads AKGKGNEGREEAEEASGKSK. The span at 100–116 shows a compositional bias: basic and acidic residues; that stretch reads KGNEGREEAEEASGKSK.

The protein belongs to the UPF0440 family.

This is an uncharacterized protein from Pyrococcus horikoshii (strain ATCC 700860 / DSM 12428 / JCM 9974 / NBRC 100139 / OT-3).